The chain runs to 523 residues: Calcium and calcium/calmodulin-dependent serine/threonine-protein kinase DMI-3 (523 aa).

In terms of domain architecture, Protein kinase spans 12–306 (YEVSEILGRG…ALELLSDPWV (295 aa)). ATP-binding positions include 18 to 26 (LGRGGFSVV) and Lys-47. The active-site Proton acceptor is Asp-171. A Phosphothreonine modification is found at Thr-271. The segment at 329 to 342 (ARRKLRAAAIASVW) is calmodulin-binding. 3 EF-hand domains span residues 400-435 (SLIP…LKNS), 436-471 (KGED…LPYD), and 478-513 (TEPG…DSSL). Asp-413, Asn-415, Asp-417, Thr-419, Glu-424, Asp-449, Asp-451, Ser-453, Cys-455, Glu-460, Asp-491, Asn-493, Asp-495, Lys-497, and Glu-502 together coordinate Ca(2+).

It belongs to the protein kinase superfamily. CAMK Ser/Thr protein kinase family. CaMK subfamily. In terms of assembly, interacts with IPD3. Post-translationally, autophosphorylation. As to expression, highly expressed in roots. Expressed in root hairs and nodules. Expressed at low levels in flowers. Not detected in leaves or stems.

The protein localises to the nucleus. The enzyme catalyses L-seryl-[protein] + ATP = O-phospho-L-seryl-[protein] + ADP + H(+). The catalysed reaction is L-threonyl-[protein] + ATP = O-phospho-L-threonyl-[protein] + ADP + H(+). Activated by calcium. Autophosphorylation may play an important role in the regulation of the kinase activity. Functionally, during nodulation, plays a central role in bacterial infection and contributes to nodule organogenesis. Protein kinase that recognizes the calcium spiking induced by Nod factors and translates this signal to components controlling nodulation and mycorrhizal infection responses. May phosphorylate the NSP1 protein. Required in epidermal and cortical cells to promote infection thread (IT) formation in root hairs. The chain is Calcium and calcium/calmodulin-dependent serine/threonine-protein kinase DMI-3 from Medicago truncatula (Barrel medic).